Reading from the N-terminus, the 322-residue chain is Peptidase 1 (322 aa).

The N-terminal stretch at 1-18 (MKFVLAIASLLVLSVVYA) is a signal peptide. The propeptide occupies 19–99 (YPSEIRTFEE…LKKEFDLDAG (81 aa)). Cys-131 and Cys-171 are disulfide-bonded. The active site involves Cys-134. Asn-152 carries an N-linked (GlcNAc...) asparagine glycan. Residues His-270 and Asn-290 contribute to the active site.

It belongs to the peptidase C1 family. In terms of tissue distribution, expressed in the gut.

The protein resides in the secreted. The enzyme catalyses Broad endopeptidase specificity.. Its function is as follows. Probable thiol protease. The chain is Peptidase 1 from Psoroptes ovis (Sheep scab mite).